The sequence spans 673 residues: Polyadenylate-binding protein, cytoplasmic and nuclear (673 aa).

The disordered stretch occupies residues 1 to 39; that stretch reads MSAETATSPAPAAETPVAPAPATQTTPAEGAPTPAAAAP. 4 RRM domains span residues 46 to 124, 134 to 211, 227 to 304, and 330 to 407; these read ASLY…WSQR, GNIF…HHVG, TNVY…RAQT, and VNLY…LAQR. A disordered region spans residues 300–322; that stretch reads GRAQTKSEREAELKKSHEEKRLE. The segment covering 304–322 has biased composition (basic and acidic residues); that stretch reads TKSEREAELKKSHEEKRLE. Disordered regions lie at residues 509 to 572 and 644 to 673; these read APGY…AGRL and WGKD…EKKE. In terms of domain architecture, PABC spans 569–646; it reads AGRLDAQSLA…ALRVLAEWGK (78 aa).

It belongs to the polyadenylate-binding protein type-1 family.

The protein resides in the cytoplasm. Its subcellular location is the nucleus. Its function is as follows. Binds the poly(A) tail of mRNA. Appears to be an important mediator of the multiple roles of the poly(A) tail in mRNA biogenesis, stability and translation. In the nucleus, involved in both mRNA cleavage and polyadenylation. Is also required for efficient mRNA export to the cytoplasm. Acts in concert with a poly(A)-specific nuclease (PAN) to affect poly(A) tail shortening, which may occur concomitantly with either nucleocytoplasmic mRNA transport or translational initiation. In the cytoplasm, stimulates translation initiation and regulates mRNA decay through translation termination-coupled poly(A) shortening, probably mediated by PAN. In Cryptococcus neoformans var. neoformans serotype D (strain B-3501A) (Filobasidiella neoformans), this protein is Polyadenylate-binding protein, cytoplasmic and nuclear (PAB1).